The following is a 213-amino-acid chain: ATP phosphoribosyltransferase (213 aa).

Belongs to the ATP phosphoribosyltransferase family. Short subfamily. As to quaternary structure, heteromultimer composed of HisG and HisZ subunits.

It localises to the cytoplasm. The catalysed reaction is 1-(5-phospho-beta-D-ribosyl)-ATP + diphosphate = 5-phospho-alpha-D-ribose 1-diphosphate + ATP. The protein operates within amino-acid biosynthesis; L-histidine biosynthesis; L-histidine from 5-phospho-alpha-D-ribose 1-diphosphate: step 1/9. Functionally, catalyzes the condensation of ATP and 5-phosphoribose 1-diphosphate to form N'-(5'-phosphoribosyl)-ATP (PR-ATP). Has a crucial role in the pathway because the rate of histidine biosynthesis seems to be controlled primarily by regulation of HisG enzymatic activity. The chain is ATP phosphoribosyltransferase from Thermoanaerobacter pseudethanolicus (strain ATCC 33223 / 39E) (Clostridium thermohydrosulfuricum).